The following is a 538-amino-acid chain: ATP synthase subunit beta 2 (538 aa).

The span at methionine 1–threonine 10 shows a compositional bias: polar residues. Positions methionine 1–aspartate 30 are disordered. Glycine 185 to threonine 192 is a binding site for ATP. The segment covering alanine 494–alanine 505 has biased composition (basic and acidic residues). The segment at alanine 494–arginine 538 is disordered. The segment covering alanine 506–alanine 529 has biased composition (low complexity).

It belongs to the ATPase alpha/beta chains family. In terms of assembly, F-type ATPases have 2 components, CF(1) - the catalytic core - and CF(0) - the membrane proton channel. CF(1) has five subunits: alpha(3), beta(3), gamma(1), delta(1), epsilon(1). CF(0) has three main subunits: a(1), b(2) and c(9-12). The alpha and beta chains form an alternating ring which encloses part of the gamma chain. CF(1) is attached to CF(0) by a central stalk formed by the gamma and epsilon chains, while a peripheral stalk is formed by the delta and b chains.

It is found in the cell inner membrane. It catalyses the reaction ATP + H2O + 4 H(+)(in) = ADP + phosphate + 5 H(+)(out). Produces ATP from ADP in the presence of a proton gradient across the membrane. The catalytic sites are hosted primarily by the beta subunits. This is ATP synthase subunit beta 2 from Burkholderia pseudomallei (strain K96243).